The primary structure comprises 325 residues: Elongation factor P--(R)-beta-lysine ligase (325 aa).

76–78 lines the substrate pocket; it reads SPE. ATP is bound by residues 100-102 and Asn109; that span reads RNE. Tyr118 is a binding site for substrate. 244-245 is an ATP binding site; it reads EL. Glu251 lines the substrate pocket. Gly300 lines the ATP pocket.

This sequence belongs to the class-II aminoacyl-tRNA synthetase family. EpmA subfamily. Homodimer.

The catalysed reaction is D-beta-lysine + L-lysyl-[protein] + ATP = N(6)-((3R)-3,6-diaminohexanoyl)-L-lysyl-[protein] + AMP + diphosphate + H(+). In terms of biological role, with EpmB is involved in the beta-lysylation step of the post-translational modification of translation elongation factor P (EF-P). Catalyzes the ATP-dependent activation of (R)-beta-lysine produced by EpmB, forming a lysyl-adenylate, from which the beta-lysyl moiety is then transferred to the epsilon-amino group of a conserved specific lysine residue in EF-P. The polypeptide is Elongation factor P--(R)-beta-lysine ligase (Pectobacterium carotovorum subsp. carotovorum (strain PC1)).